Here is a 66-residue protein sequence, read N- to C-terminus: Large ribosomal subunit protein bL35 (66 aa).

This sequence belongs to the bacterial ribosomal protein bL35 family.

The protein is Large ribosomal subunit protein bL35 of Ruegeria pomeroyi (strain ATCC 700808 / DSM 15171 / DSS-3) (Silicibacter pomeroyi).